The following is a 328-amino-acid chain: tRNA uridine(34) hydroxylase (328 aa).

The Rhodanese domain occupies 130–224 (LDEDTVVLDT…YGKDPEVQGE (95 aa)). The active-site Cysteine persulfide intermediate is the Cys184.

It belongs to the TrhO family.

It carries out the reaction uridine(34) in tRNA + AH2 + O2 = 5-hydroxyuridine(34) in tRNA + A + H2O. Functionally, catalyzes oxygen-dependent 5-hydroxyuridine (ho5U) modification at position 34 in tRNAs. The sequence is that of tRNA uridine(34) hydroxylase from Streptococcus gordonii (strain Challis / ATCC 35105 / BCRC 15272 / CH1 / DL1 / V288).